A 126-amino-acid polypeptide reads, in one-letter code: Holo-[acyl-carrier-protein] synthase (126 aa).

Mg(2+)-binding residues include Asp-9 and Glu-58.

Belongs to the P-Pant transferase superfamily. AcpS family. It depends on Mg(2+) as a cofactor.

It localises to the cytoplasm. The catalysed reaction is apo-[ACP] + CoA = holo-[ACP] + adenosine 3',5'-bisphosphate + H(+). Transfers the 4'-phosphopantetheine moiety from coenzyme A to a Ser of acyl-carrier-protein. The sequence is that of Holo-[acyl-carrier-protein] synthase from Shewanella frigidimarina (strain NCIMB 400).